The chain runs to 561 residues: Putative transport protein YbjL (561 aa).

Transmembrane regions (helical) follow at residues L8 to G28, L32 to Q52, F66 to F86, M94 to F114, and N158 to A178. RCK C-terminal domains are found at residues L202–N288 and V292–F373. A run of 5 helical transmembrane segments spans residues L383–F403, F406–M426, V451–I471, M475–A495, and A540–L560.

It belongs to the AAE transporter (TC 2.A.81) family. YbjL subfamily.

The protein localises to the cell membrane. The protein is Putative transport protein YbjL of Escherichia fergusonii (strain ATCC 35469 / DSM 13698 / CCUG 18766 / IAM 14443 / JCM 21226 / LMG 7866 / NBRC 102419 / NCTC 12128 / CDC 0568-73).